We begin with the raw amino-acid sequence, 237 residues long: Phosphoribosylaminoimidazole-succinocarboxamide synthase (237 aa).

Belongs to the SAICAR synthetase family.

The enzyme catalyses 5-amino-1-(5-phospho-D-ribosyl)imidazole-4-carboxylate + L-aspartate + ATP = (2S)-2-[5-amino-1-(5-phospho-beta-D-ribosyl)imidazole-4-carboxamido]succinate + ADP + phosphate + 2 H(+). It functions in the pathway purine metabolism; IMP biosynthesis via de novo pathway; 5-amino-1-(5-phospho-D-ribosyl)imidazole-4-carboxamide from 5-amino-1-(5-phospho-D-ribosyl)imidazole-4-carboxylate: step 1/2. This is Phosphoribosylaminoimidazole-succinocarboxamide synthase from Proteus mirabilis (strain HI4320).